The primary structure comprises 211 residues: Histidine biosynthesis bifunctional protein HisIE (211 aa).

The segment at 1-122 (MSFKAAEVSS…DAQEESQMVW (122 aa)) is phosphoribosyl-AMP cyclohydrolase. The interval 123–211 (LHQLEQLLAA…VVNKLKERHK (89 aa)) is phosphoribosyl-ATP pyrophosphohydrolase.

In the N-terminal section; belongs to the PRA-CH family. The protein in the C-terminal section; belongs to the PRA-PH family.

The protein resides in the cytoplasm. It carries out the reaction 1-(5-phospho-beta-D-ribosyl)-ATP + H2O = 1-(5-phospho-beta-D-ribosyl)-5'-AMP + diphosphate + H(+). It catalyses the reaction 1-(5-phospho-beta-D-ribosyl)-5'-AMP + H2O = 1-(5-phospho-beta-D-ribosyl)-5-[(5-phospho-beta-D-ribosylamino)methylideneamino]imidazole-4-carboxamide. It participates in amino-acid biosynthesis; L-histidine biosynthesis; L-histidine from 5-phospho-alpha-D-ribose 1-diphosphate: step 2/9. The protein operates within amino-acid biosynthesis; L-histidine biosynthesis; L-histidine from 5-phospho-alpha-D-ribose 1-diphosphate: step 3/9. This chain is Histidine biosynthesis bifunctional protein HisIE, found in Vibrio parahaemolyticus serotype O3:K6 (strain RIMD 2210633).